A 100-amino-acid chain; its full sequence is Nucleoid-associated protein jhp_0031 (100 aa).

Belongs to the YbaB/EbfC family. As to quaternary structure, homodimer.

The protein resides in the cytoplasm. Its subcellular location is the nucleoid. Binds to DNA and alters its conformation. May be involved in regulation of gene expression, nucleoid organization and DNA protection. In Helicobacter pylori (strain J99 / ATCC 700824) (Campylobacter pylori J99), this protein is Nucleoid-associated protein jhp_0031.